Here is a 361-residue protein sequence, read N- to C-terminus: Peptide chain release factor 1 (361 aa).

At Gln-237 the chain carries N5-methylglutamine. The segment covering 287 to 297 (KQQKEQSDTRK) has biased composition (basic and acidic residues). The tract at residues 287-313 (KQQKEQSDTRKSLVGSGDRSERIRTYN) is disordered.

It belongs to the prokaryotic/mitochondrial release factor family. Methylated by PrmC. Methylation increases the termination efficiency of RF1.

The protein resides in the cytoplasm. Functionally, peptide chain release factor 1 directs the termination of translation in response to the peptide chain termination codons UAG and UAA. This Francisella tularensis subsp. tularensis (strain FSC 198) protein is Peptide chain release factor 1.